We begin with the raw amino-acid sequence, 240 residues long: Protein unc-119 homolog A (240 aa).

The span at 1–12 shows a compositional bias: gly residues; the sequence is MKVKKGGGGTGS. The segment at 1-62 is disordered; the sequence is MKVKKGGGGT…PLQGKQPIGP (62 aa). 3 positions are modified to phosphoserine; by CK2: Ser-37, Ser-39, and Ser-41. Residue Tyr-131 coordinates tetradecanoate.

This sequence belongs to the PDE6D/unc-119 family. May interact with GTP-bound ARL1. Interacts with ARL2 and ARL3 (GTP-bound forms); this promotes the release of myristoylated cargo proteins. Found in a complex with ARL3, RP2 and UNC119; RP2 induces hydrolysis of GTP ARL3 in the complex, leading to the release of UNC119. Interacts with NPHP3 (when myristoylated). Interacts with CYS1 (when myristoylated). Interacts with MACIR; interaction only takes place when UNC119 is not liganded with myristoylated proteins. Interacts with CABP4; in the absence of calcium. Interacts with DNM1; leading to a decrease of DNM1 GTPase activity. Interacts with LCK; this interaction plays a crucial role in activation of LCK. Interacts with FYN. Interacts with RAB11A; in a cell cycle-dependent manner. Interacts with LYN (via SH2 and SH3 domains); leading to LYN activation. Found in a complex with ABL1, ABL2, CRK and UNC119; leading to the inhibition of CRK phosphorylation by ABL kinases. Interacts with CD44. Interacts with KLHL18 (via kelch repeats). Interacts with PPP3CA, PPP3CB and PPP3CC. Interacts with USP48; this interaction promotes UNC119 stability. Post-translationally, phosphorylation suppresses its interaction with KLHL18 and down-regulates its KLHL18-mediated degradation. Phosphorylated more under light conditions than dark conditions. Dephosphorylated by calcineurin. Localized in photoreceptor synapses in the outer plexiform layer of the retina.

It localises to the cytoplasm. It is found in the cytoskeleton. The protein localises to the microtubule organizing center. The protein resides in the centrosome. Its subcellular location is the spindle. It localises to the spindle pole. Its function is as follows. Involved in synaptic functions in photoreceptor cells, the signal transduction in immune cells as a Src family kinase activator, endosome recycling, the uptake of bacteria and endocytosis, protein trafficking in sensory neurons and as lipid-binding chaperone with specificity for a diverse subset of myristoylated proteins. Specifically binds the myristoyl moiety of a subset of N-terminally myristoylated proteins and is required for their localization. Binds myristoylated GNAT1 and is required for G-protein localization and trafficking in sensory neurons. Probably plays a role in trafficking proteins in photoreceptor cells. Plays important roles in mediating Src family kinase signals for the completion of cytokinesis via RAB11A. The protein is Protein unc-119 homolog A (Unc119) of Mus musculus (Mouse).